A 31-amino-acid polypeptide reads, in one-letter code: Conotoxin pc6d (31 aa).

3 disulfide bridges follow: Cys-2–Cys-20, Cys-9–Cys-25, and Cys-19–Cys-29.

This sequence belongs to the conotoxin O1 superfamily. In terms of tissue distribution, expressed by the venom duct.

It is found in the secreted. In Conus pictus (Cone snail), this protein is Conotoxin pc6d.